A 370-amino-acid polypeptide reads, in one-letter code: Nodulation protein Z (370 aa).

Residues 47-361 (SSNDRFVVSR…NDPGRLILIE (315 aa)) enclose the GT23 domain.

The protein belongs to the glycosyltransferase 23 family.

Its function is as follows. Fucosyltransferase which adds the fucose moiety of the nod factor on its terminal reducing N-acetylglucosamine end. Uses GDP-fucose as the donor group. The sequence is that of Nodulation protein Z (nodZ) from Bradyrhizobium diazoefficiens (strain JCM 10833 / BCRC 13528 / IAM 13628 / NBRC 14792 / USDA 110).